Consider the following 168-residue polypeptide: G/U mismatch-specific DNA glycosylase (168 aa).

The protein belongs to the uracil-DNA glycosylase (UDG) superfamily. TDG/mug family. As to quaternary structure, binds DNA as a monomer.

The protein resides in the cytoplasm. It catalyses the reaction Specifically hydrolyzes mismatched double-stranded DNA and polynucleotides, releasing free uracil.. In terms of biological role, excises ethenocytosine and uracil, which can arise by alkylation or deamination of cytosine, respectively, from the corresponding mispairs with guanine in ds-DNA. It is capable of hydrolyzing the carbon-nitrogen bond between the sugar-phosphate backbone of the DNA and the mispaired base. The complementary strand guanine functions in substrate recognition. Required for DNA damage lesion repair in stationary-phase cells. This is G/U mismatch-specific DNA glycosylase from Salmonella gallinarum (strain 287/91 / NCTC 13346).